The sequence spans 397 residues: Phosphoglycerate kinase (397 aa).

Residues 25-27 (DLN), arginine 41, 64-67 (HLGR), arginine 118, and arginine 151 each bind substrate. Residues lysine 202, glutamate 324, and 350–353 (GGDT) contribute to the ATP site.

It belongs to the phosphoglycerate kinase family. In terms of assembly, monomer.

Its subcellular location is the cytoplasm. The catalysed reaction is (2R)-3-phosphoglycerate + ATP = (2R)-3-phospho-glyceroyl phosphate + ADP. Its pathway is carbohydrate degradation; glycolysis; pyruvate from D-glyceraldehyde 3-phosphate: step 2/5. The sequence is that of Phosphoglycerate kinase from Acidovorax sp. (strain JS42).